The sequence spans 274 residues: Ribosomal RNA small subunit methyltransferase A (274 aa).

Asn17, Leu19, Gly44, Glu65, Asp89, and Asn111 together coordinate S-adenosyl-L-methionine.

It belongs to the class I-like SAM-binding methyltransferase superfamily. rRNA adenine N(6)-methyltransferase family. RsmA subfamily.

The protein localises to the cytoplasm. The enzyme catalyses adenosine(1518)/adenosine(1519) in 16S rRNA + 4 S-adenosyl-L-methionine = N(6)-dimethyladenosine(1518)/N(6)-dimethyladenosine(1519) in 16S rRNA + 4 S-adenosyl-L-homocysteine + 4 H(+). Functionally, specifically dimethylates two adjacent adenosines (A1518 and A1519) in the loop of a conserved hairpin near the 3'-end of 16S rRNA in the 30S particle. May play a critical role in biogenesis of 30S subunits. This chain is Ribosomal RNA small subunit methyltransferase A, found in Buchnera aphidicola subsp. Schizaphis graminum (strain Sg).